The chain runs to 247 residues: tRNA pseudouridine synthase A (247 aa).

D53 (nucleophile) is an active-site residue. Substrate is bound at residue Y112.

It belongs to the tRNA pseudouridine synthase TruA family. Homodimer.

The catalysed reaction is uridine(38/39/40) in tRNA = pseudouridine(38/39/40) in tRNA. Its function is as follows. Formation of pseudouridine at positions 38, 39 and 40 in the anticodon stem and loop of transfer RNAs. The polypeptide is tRNA pseudouridine synthase A (Anaplasma marginale (strain Florida)).